Here is a 27-residue protein sequence, read N- to C-terminus: thr operon leader peptide (27 aa).

This sequence belongs to the thr operon leader peptide family.

Its function is as follows. This protein is involved in control of the biosynthesis of threonine. The sequence is that of thr operon leader peptide from Escherichia coli O157:H7.